Reading from the N-terminus, the 158-residue chain is MSDNKVNLPLRNGVGIVVLNKDNKVFVAKRIDNQKNFWQMPQGGVDKGEDYLTAAYRELEEETSIKNVELIKECDGLISYELPKNLLGIIWKGKYRGQEQKWFIMRFLGQDNEIDIKTKHPEFSEWKWIDLENITDLVVDFKLHVYKDVKEKVKEILN.

Positions 9–151 constitute a Nudix hydrolase domain; sequence PLRNGVGIVV…KLHVYKDVKE (143 aa). The Nudix box motif lies at 43 to 64; that stretch reads GGVDKGEDYLTAAYRELEEETS.

Belongs to the Nudix hydrolase family. RppH subfamily. A divalent metal cation is required as a cofactor.

Accelerates the degradation of transcripts by removing pyrophosphate from the 5'-end of triphosphorylated RNA, leading to a more labile monophosphorylated state that can stimulate subsequent ribonuclease cleavage. The sequence is that of RNA pyrophosphohydrolase from Pelagibacter ubique (strain HTCC1062).